We begin with the raw amino-acid sequence, 104 residues long: Pyrimidine/purine nucleoside phosphorylase (104 aa).

The protein belongs to the nucleoside phosphorylase PpnP family.

The enzyme catalyses a purine D-ribonucleoside + phosphate = a purine nucleobase + alpha-D-ribose 1-phosphate. The catalysed reaction is adenosine + phosphate = alpha-D-ribose 1-phosphate + adenine. It catalyses the reaction cytidine + phosphate = cytosine + alpha-D-ribose 1-phosphate. It carries out the reaction guanosine + phosphate = alpha-D-ribose 1-phosphate + guanine. The enzyme catalyses inosine + phosphate = alpha-D-ribose 1-phosphate + hypoxanthine. The catalysed reaction is thymidine + phosphate = 2-deoxy-alpha-D-ribose 1-phosphate + thymine. It catalyses the reaction uridine + phosphate = alpha-D-ribose 1-phosphate + uracil. It carries out the reaction xanthosine + phosphate = alpha-D-ribose 1-phosphate + xanthine. Catalyzes the phosphorolysis of diverse nucleosides, yielding D-ribose 1-phosphate and the respective free bases. Can use uridine, adenosine, guanosine, cytidine, thymidine, inosine and xanthosine as substrates. Also catalyzes the reverse reactions. The sequence is that of Pyrimidine/purine nucleoside phosphorylase from Geobacter sulfurreducens (strain ATCC 51573 / DSM 12127 / PCA).